Reading from the N-terminus, the 297-residue chain is MSNWLVDKLIPSIMRSETQKSSVPEGLWHKCPSCEAVLYRPELEKTLDVCPKCHHHMRIDARTRLDIFLDADGREEIAAELEPVDRLKFRDSKKYKDRLSAAQKQTGEKDALIAMSGKVLNVPVVACAFEFSFMGGSMGAIVGERFVRAANVALEKRCPLVCFSASGGARMQEALISLMQMAKTSAVLARMREEGLPFISVLTDPVYGGVSASLAMLGDVIVAEPKALIGFAGPRVIEQTVREKLPEGFQRSEFLLEHGAIDLIIPRAELRSRLARLLAQMQKLPTPVETSQVTAKA.

Positions 27 to 296 constitute a CoA carboxyltransferase N-terminal domain; the sequence is LWHKCPSCEA…PVETSQVTAK (270 aa). 4 residues coordinate Zn(2+): cysteine 31, cysteine 34, cysteine 50, and cysteine 53. Residues 31 to 53 form a C4-type zinc finger; that stretch reads CPSCEAVLYRPELEKTLDVCPKC.

Belongs to the AccD/PCCB family. Acetyl-CoA carboxylase is a heterohexamer composed of biotin carboxyl carrier protein (AccB), biotin carboxylase (AccC) and two subunits each of ACCase subunit alpha (AccA) and ACCase subunit beta (AccD). Zn(2+) serves as cofactor.

Its subcellular location is the cytoplasm. The catalysed reaction is N(6)-carboxybiotinyl-L-lysyl-[protein] + acetyl-CoA = N(6)-biotinyl-L-lysyl-[protein] + malonyl-CoA. It functions in the pathway lipid metabolism; malonyl-CoA biosynthesis; malonyl-CoA from acetyl-CoA: step 1/1. Functionally, component of the acetyl coenzyme A carboxylase (ACC) complex. Biotin carboxylase (BC) catalyzes the carboxylation of biotin on its carrier protein (BCCP) and then the CO(2) group is transferred by the transcarboxylase to acetyl-CoA to form malonyl-CoA. The sequence is that of Acetyl-coenzyme A carboxylase carboxyl transferase subunit beta from Stutzerimonas stutzeri (strain A1501) (Pseudomonas stutzeri).